A 185-amino-acid chain; its full sequence is Ribosome-recycling factor (185 aa).

The segment at 137–166 (DGLKKAEKDGDIGQDESRGQSEKVQKMTDD) is disordered.

This sequence belongs to the RRF family.

It is found in the cytoplasm. Functionally, responsible for the release of ribosomes from messenger RNA at the termination of protein biosynthesis. May increase the efficiency of translation by recycling ribosomes from one round of translation to another. The protein is Ribosome-recycling factor of Agrobacterium fabrum (strain C58 / ATCC 33970) (Agrobacterium tumefaciens (strain C58)).